A 330-amino-acid polypeptide reads, in one-letter code: 4,5-dihydroxyphthalate decarboxylase (330 aa).

This sequence to P.putida DHP decarboxylase.

The enzyme catalyses 4,5-dihydroxyphthalate + H(+) = 3,4-dihydroxybenzoate + CO2. Its pathway is xenobiotic degradation; phthalate degradation; 3,4-dihydroxybenzoate from phthalate: step 3/3. The sequence is that of 4,5-dihydroxyphthalate decarboxylase (phtD) from Comamonas testosteroni (Pseudomonas testosteroni).